The chain runs to 397 residues: Acetate kinase (397 aa).

Asn-7 is a Mg(2+) binding site. Residue Lys-14 coordinates ATP. Arg-90 is a substrate binding site. The active-site Proton donor/acceptor is Asp-147. ATP is bound by residues 207 to 211 (HLGNG), 282 to 284 (DFR), and 330 to 334 (GLGEN). Residue Glu-383 participates in Mg(2+) binding.

This sequence belongs to the acetokinase family. In terms of assembly, homodimer. Mg(2+) is required as a cofactor. Mn(2+) serves as cofactor.

The protein localises to the cytoplasm. It catalyses the reaction acetate + ATP = acetyl phosphate + ADP. It functions in the pathway metabolic intermediate biosynthesis; acetyl-CoA biosynthesis; acetyl-CoA from acetate: step 1/2. Functionally, catalyzes the formation of acetyl phosphate from acetate and ATP. Can also catalyze the reverse reaction. The protein is Acetate kinase of Clostridium botulinum (strain Okra / Type B1).